The primary structure comprises 592 residues: MRCLALSAVFLCLTLAGHFHLSDAYKNEVQITPDPLDAVETTTKKSSWFGGFKKFFGSDGTTTTTSTIAPPVVTSPKSVVVTPTAANKPPPLVISHAPLMPLGPRPDTPGSSPFGASQNPQTPPQWPSSTRATPSHPSQPSQPSQQPPLPGFASYRPQKPQPNSYDLSYGGGPQPAPAGTGRPGFGLGISSTTSTTTTAKPITSTTGKTPQQKEDFPALPGPRRPSQKEDFPALPAPKTPPGSPTPTPGSPSAWQSPLPTPQHPVHPPTKATSAATPTPTPTPSFSSSVTPTPAHGSSVGPHKDGGGGGGGGTTTVRPGFQSSGNSVATDDEIRQLTELLYTKESNSQIGNIQVNLQGRTRSIDSADEAPNPLLTVDSKALESPTIVKMRLLFNNYEHDTHVNEHVTPNERKEENDFLDAVMATPVMRQAMLFLQQKGVVSPDPKTHRDLVKELWFTQYSRGQGKIGSSGFEHVFVYEVKDGTIIGFHNWVYIGDEEKDGRFDYKGYMKEQDIGTKGKIVKIRFSHQGLNKPVNTVFVGTSPELELALYTVCFQLRPDRTCPVSLGNSKFGIVTYSWRYRGKNLIGSAYPEI.

The N-terminal stretch at 1 to 24 (MRCLALSAVFLCLTLAGHFHLSDA) is a signal peptide. A disordered region spans residues 83–329 (PTAANKPPPL…FQSSGNSVAT (247 aa)). The segment covering 109–120 (PGSSPFGASQNP) has biased composition (polar residues). Low complexity-rich tracts occupy residues 134–144 (PSHPSQPSQPS) and 188–209 (GISS…TGKT). Pro residues-rich tracts occupy residues 234 to 249 (LPAP…PTPG) and 258 to 267 (LPTPQHPVHP). The segment covering 268–294 (PTKATSAATPTPTPTPSFSSSVTPTPA) has biased composition (low complexity). The 264-residue stretch at 329-592 (TDDEIRQLTE…NLIGSAYPEI (264 aa)) folds into the EndoU domain. Active-site residues include H473, H488, and K531.

Belongs to the ENDOU family. In terms of assembly, monomer. Mn(2+) serves as cofactor. As to expression, predominantly expressed in head. Expressed in fat body cells.

It is found in the endoplasmic reticulum lumen. Its subcellular location is the secreted. It carries out the reaction a ribonucleotidyl-ribonucleotide-RNA + H2O = a 3'-end 3'-phospho-ribonucleotide-RNA + a 5'-end dephospho-ribonucleoside-RNA + H(+). Its function is as follows. Endoribonuclease that cleaves single-stranded RNAs; unlike its paralog EndoU it does not appear to preferentially cleave at uridylates and releases linear products instead of products that have 2'-3'-cyclic phosphate termini. Preferentially cleaves single stranded RNA at sites with AU, UC and poly-U sites cleaved less efficiently. Targets mRNAs encoding proteins involved in lipid metabolism, particularly those involved in lipolysis, to regulate their expression. This chain is Endoribonuclease Arlr, found in Drosophila melanogaster (Fruit fly).